A 525-amino-acid polypeptide reads, in one-letter code: Asparagine synthetase domain-containing protein YML096W (525 aa).

C2 serves as the catalytic For GATase activity. Residues 2–209 (CGILLHYCPN…LNSNQRSHLP (208 aa)) enclose the Glutamine amidotransferase type-2 domain. The Asparagine synthetase domain maps to 210–523 (YEVTSEIDLN…GTDLLKENRN (314 aa)). The disordered stretch occupies residues 503–525 (SAKMTKDGNKHGTDLLKENRNCS). Basic and acidic residues predominate over residues 506–525 (MTKDGNKHGTDLLKENRNCS).

The protein localises to the cytoplasm. The polypeptide is Asparagine synthetase domain-containing protein YML096W (Saccharomyces cerevisiae (strain ATCC 204508 / S288c) (Baker's yeast)).